We begin with the raw amino-acid sequence, 794 residues long: Elongator complex protein 2 (794 aa).

WD repeat units lie at residues 55–93, 98–140, 147–188, 203–244, 286–328, 337–376, 384–423, 433–472, 557–601, 604–643, 654–693, 705–751, and 759–794; these read EHTK…TTKS, GHTS…YVCF, DGFC…AGEG, GHED…KEQM, GHEG…IWLE, GNSV…PQLW, GHYG…GANP, IHGY…ENFR, GHGY…QIQK, GHQL…VSYQ, VHTR…KESS, LKNE…WKLL, and AHHL…IKLT.

Belongs to the WD repeat ELP2 family. As to quaternary structure, component of the elongator complex composed of Elp1, Elp2, Elp3, Elp4, Elp5 and Elp6. The elongator complex associates with and stabilizes microtubules; efficient interaction requires the full complex.

It localises to the cytoplasm. The protein localises to the nucleus. It is found in the cytoskeleton. Its subcellular location is the spindle. It participates in tRNA modification; 5-methoxycarbonylmethyl-2-thiouridine-tRNA biosynthesis. Functionally, component of the elongator complex, which is required for multiple tRNA modifications, including mcm5U (5-methoxycarbonylmethyl uridine), mcm5s2U (5-methoxycarbonylmethyl-2-thiouridine), and ncm5U (5-carbamoylmethyl uridine). The elongator complex catalyzes the formation of carboxymethyluridine in the wobble base at position 34 in tRNAs. Binding by the elongator complex stabilizes microtubules and promotes their growth. This induces central spindle asymmetry, promoting polarized signaling endosome trafficking during asymmetric cell division and cell fate assignation of sensory organ precursor cells. Involved in the regulation of the STAT pathway. The sequence is that of Elongator complex protein 2 from Drosophila melanogaster (Fruit fly).